The primary structure comprises 406 residues: Phosphopentomutase (406 aa).

Positions 10, 305, 310, 346, 347, and 358 each coordinate Mn(2+).

It belongs to the phosphopentomutase family. It depends on Mn(2+) as a cofactor.

It localises to the cytoplasm. It catalyses the reaction 2-deoxy-alpha-D-ribose 1-phosphate = 2-deoxy-D-ribose 5-phosphate. The enzyme catalyses alpha-D-ribose 1-phosphate = D-ribose 5-phosphate. It participates in carbohydrate degradation; 2-deoxy-D-ribose 1-phosphate degradation; D-glyceraldehyde 3-phosphate and acetaldehyde from 2-deoxy-alpha-D-ribose 1-phosphate: step 1/2. Isomerase that catalyzes the conversion of deoxy-ribose 1-phosphate (dRib-1-P) and ribose 1-phosphate (Rib-1-P) to deoxy-ribose 5-phosphate (dRib-5-P) and ribose 5-phosphate (Rib-5-P), respectively. This chain is Phosphopentomutase, found in Rhizobium leguminosarum bv. trifolii (strain WSM2304).